The following is a 667-amino-acid chain: DNA ligase (667 aa).

NAD(+)-binding positions include 34 to 38, 83 to 84, and E112; these read DSEYD and SL. The N6-AMP-lysine intermediate role is filled by K114. NAD(+) is bound by residues R135, E169, K285, and K309. The Zn(2+) site is built by C403, C406, C421, and C426. One can recognise a BRCT domain in the interval 589-667; that stretch reads ASDSYFAGKT…EARLISELKK (79 aa).

Belongs to the NAD-dependent DNA ligase family. LigA subfamily. Requires Mg(2+) as cofactor. Mn(2+) serves as cofactor.

The catalysed reaction is NAD(+) + (deoxyribonucleotide)n-3'-hydroxyl + 5'-phospho-(deoxyribonucleotide)m = (deoxyribonucleotide)n+m + AMP + beta-nicotinamide D-nucleotide.. In terms of biological role, DNA ligase that catalyzes the formation of phosphodiester linkages between 5'-phosphoryl and 3'-hydroxyl groups in double-stranded DNA using NAD as a coenzyme and as the energy source for the reaction. It is essential for DNA replication and repair of damaged DNA. This is DNA ligase from Bacillus licheniformis (strain ATCC 14580 / DSM 13 / JCM 2505 / CCUG 7422 / NBRC 12200 / NCIMB 9375 / NCTC 10341 / NRRL NRS-1264 / Gibson 46).